The following is a 203-amino-acid chain: Outer-membrane lipoprotein carrier protein (203 aa).

An N-terminal signal peptide occupies residues 1–21; sequence MKKLLVACCLLSGLISAHALA.

The protein belongs to the LolA family. In terms of assembly, monomer.

It localises to the periplasm. Participates in the translocation of lipoproteins from the inner membrane to the outer membrane. Only forms a complex with a lipoprotein if the residue after the N-terminal Cys is not an aspartate (The Asp acts as a targeting signal to indicate that the lipoprotein should stay in the inner membrane). This Yersinia enterocolitica serotype O:8 / biotype 1B (strain NCTC 13174 / 8081) protein is Outer-membrane lipoprotein carrier protein.